A 420-amino-acid polypeptide reads, in one-letter code: MLAVLGVIVAAVIVIALSIWLGKSRKRDLDRAMGKVAPDNKKTRDAKAAADARLAAEAEEAKAATAAEPAKSAESAKAEPAPAAQAEPEPAAAPKPESQPASKPTPAKPETPESVGSRLTRLKAKLAKSGNPFGKALFDILAKDNLSEADWEDVEDTLLLADVGADASAQLVDDLRTDARITGKADPAEVRATLKEKLLDLVGRDTDRRLNAEKPGAAKPSVIIMVGVNGTGKTTTAGKLARLFVAENKQVMMGAADTFRAAAADQLETWGARVNVPVVRSDKDGADPASVAFEASAKAKEANADVLIIDTAGRLQNKSNLMDELGKIRRVTEKNLPVDEVLLVLDATTGQNGMAQAKVFAEAIGITGVVLSKLDGSAKGGIVVSVQKELGVPVKLVGLGEGPDDLAPFDPEGFVDGILA.

Positions Asp28–Lys62 are enriched in basic and acidic residues. A disordered region spans residues Asp28–Arg118. Low complexity predominate over residues Ala63–Pro104. Residues Gly227–Thr234, Asp310–Arg314, and Ser372–Asp375 contribute to the GTP site.

This sequence belongs to the GTP-binding SRP family. FtsY subfamily. As to quaternary structure, part of the signal recognition particle protein translocation system, which is composed of SRP and FtsY.

It localises to the cell membrane. The protein localises to the cytoplasm. The catalysed reaction is GTP + H2O = GDP + phosphate + H(+). In terms of biological role, involved in targeting and insertion of nascent membrane proteins into the cytoplasmic membrane. Acts as a receptor for the complex formed by the signal recognition particle (SRP) and the ribosome-nascent chain (RNC). This Bifidobacterium longum (strain NCC 2705) protein is Signal recognition particle receptor FtsY.